A 350-amino-acid chain; its full sequence is Galactokinase (350 aa).

14 to 17 (EHTD) is a binding site for substrate. ATP is bound by residues Ser-46 and 96-102 (GAGLSSS). The Mg(2+) site is built by Ser-102 and Glu-134. Asp-146 functions as the Proton acceptor in the catalytic mechanism. Tyr-196 is a substrate binding site.

The protein belongs to the GHMP kinase family. GalK subfamily.

The protein localises to the cytoplasm. The enzyme catalyses alpha-D-galactose + ATP = alpha-D-galactose 1-phosphate + ADP + H(+). The protein operates within carbohydrate metabolism; galactose metabolism. Functionally, catalyzes the transfer of the gamma-phosphate of ATP to D-galactose to form alpha-D-galactose-1-phosphate (Gal-1-P). The sequence is that of Galactokinase from Thermotoga maritima (strain ATCC 43589 / DSM 3109 / JCM 10099 / NBRC 100826 / MSB8).